The following is a 90-amino-acid chain: Non-structural protein NS-S (90 aa).

Positions 4–29 (KLSLPGKNLKMQKRRWKPTRMMLTRA) are nucleolar signal.

This sequence belongs to the hantavirus NS-S protein family. In terms of assembly, interacts with host MAVS; this interaction may reduce MAVS ubiquitination.

It localises to the host cytoplasm. The protein localises to the host perinuclear region. The protein resides in the host nucleus. Antagonizes host type-I IFN signaling pathway. This Homo sapiens (Human) protein is Non-structural protein NS-S (N).